A 525-amino-acid chain; its full sequence is Delta(24)-sterol reductase homolog dhcr-24 (525 aa).

A run of 2 helical transmembrane segments spans residues 27 to 47 and 214 to 234; these read WVFVVPFLLPLSFLFNTVFDF and SLFFAIPWSQGTICFLVAATI. Residues 47-239 form the FAD-binding PCMH-type domain; that stretch reads FRNRIVHAVN…VAATIKIIPC (193 aa).

This sequence belongs to the FAD-binding oxidoreductase/transferase type 4 family. The cofactor is FAD.

The protein localises to the endoplasmic reticulum membrane. It localises to the golgi apparatus membrane. The enzyme catalyses cholesterol + NADP(+) = desmosterol + NADPH + H(+). It carries out the reaction lanosterol + NADPH + H(+) = 24,25-dihydrolanosterol + NADP(+). The catalysed reaction is 5alpha-cholest-8-en-3beta-ol + NADP(+) = zymosterol + NADPH + H(+). Its pathway is steroid biosynthesis; cholesterol biosynthesis. Functionally, catalyzes the reduction of the delta-24 double bond of sterol intermediates during cholesterol biosynthesis. This Caenorhabditis elegans protein is Delta(24)-sterol reductase homolog dhcr-24.